Reading from the N-terminus, the 311-residue chain is MADVLSVGVNLEAFAQAISAIQALRSSVSRVFDCLKDGMRNKETLEGREKAFIAHFQDNLHSVNRDLNELERLSNLVGKPSENHPLHNSGLLSLDPVQDKTPLYSQLLQAYKWSNKLQYHAGLASGLLNQQSLKRSANQMGVSAKRRPKAQPTTLVLPPQYVDDVISRIDRMFPEMTIHLSRPNGTSAMLLVTLGKVLKVIVVMRSLFIDRTIVKGYNENVYTEDGKLDIWSKSNYQVFQKVTDHATTALLHYQLPQMPDVVVRSFMTWLRSYIKLFQAPCQRCGKFLQDGLPPTWRDFRTLEAFHDTCRQ.

S132 is modified (phosphoserine). Residue K134 is modified to N6-methyllysine.

It belongs to the Mediator complex subunit 27 family. Component of the Mediator complex, which is composed of MED1, MED4, MED6, MED7, MED8, MED9, MED10, MED11, MED12, MED13, MED13L, MED14, MED15, MED16, MED17, MED18, MED19, MED20, MED21, MED22, MED23, MED24, MED25, MED26, MED27, MED29, MED30, MED31, CCNC, CDK8 and CDC2L6/CDK11. The MED12, MED13, CCNC and CDK8 subunits form a distinct module termed the CDK8 module. Mediator containing the CDK8 module is less active than Mediator lacking this module in supporting transcriptional activation. Individual preparations of the Mediator complex lacking one or more distinct subunits have been variously termed ARC, CRSP, DRIP, PC2, SMCC and TRAP.

It localises to the nucleus. Component of the Mediator complex, a coactivator involved in the regulated transcription of nearly all RNA polymerase II-dependent genes. Mediator functions as a bridge to convey information from gene-specific regulatory proteins to the basal RNA polymerase II transcription machinery. Mediator is recruited to promoters by direct interactions with regulatory proteins and serves as a scaffold for the assembly of a functional preinitiation complex with RNA polymerase II and the general transcription factors. The protein is Mediator of RNA polymerase II transcription subunit 27 (MED27) of Bos taurus (Bovine).